Consider the following 104-residue polypeptide: Flagellar hook-basal body complex protein FliE (104 aa).

The protein belongs to the FliE family.

Its subcellular location is the bacterial flagellum basal body. This chain is Flagellar hook-basal body complex protein FliE, found in Escherichia coli (strain SE11).